We begin with the raw amino-acid sequence, 407 residues long: MSGGSADYSRDHGGPEGMEPDGVIESNWNEIVDNFDDMNLKESLLRGIYAYGFEKPSAIQQRAIIPCIKGYDVIAQAQSGTGKTATFAISILQQLEIDLKETQALVLAPTRELAQQIQKVILALGDYMGATCHACIGGTNVRNEMQKLQAEAPHIVVGTPGRVFDMLNRRYLSPKWIKMFVLDEADEMLSRGFKDQIYEIFQKLSTNIQVVLLSATMPMDVLEVTKKFMREPIRILVKKEELTLEGIKQFYINVEREEWKLDTLCDLYETLTITQAVIFLNTRRKVDWLTEKMHARDFTVSALHGDMDQKERDVIMREFRSGSSRVLITTDLLARGIDVQQVSLVINYDLPTNRENYIHRIGRGGRFGRKGVAINFVTEEDKRILRDIETFYNTTVEEMPMNVADLI.

The segment at 1–23 is disordered; that stretch reads MSGGSADYSRDHGGPEGMEPDGV. The Q motif signature appears at 33 to 61; sequence DNFDDMNLKESLLRGIYAYGFEKPSAIQQ. Residues 64–235 enclose the Helicase ATP-binding domain; it reads IIPCIKGYDV…KKFMREPIRI (172 aa). ATP is bound at residue 77-84; it reads AQSGTGKT. A DEAD box motif is present at residues 183–186; it reads DEAD. The Helicase C-terminal domain maps to 246 to 407; that stretch reads GIKQFYINVE…EMPMNVADLI (162 aa).

This sequence belongs to the DEAD box helicase family. eIF4A subfamily. As to quaternary structure, eIF4F is a multi-subunit complex, the composition of which varies with external and internal environmental conditions. It is composed of at least EIF4A, EIF4E and EIF4G1/EIFFG3. Interacts with EIF4E.

It carries out the reaction ATP + H2O = ADP + phosphate + H(+). ATP-dependent RNA helicase which is a subunit of the eIF4F complex involved in cap recognition and is required for mRNA binding to ribosome. In the current model of translation initiation, eIF4A unwinds RNA secondary structures in the 5'-UTR of mRNAs which is necessary to allow efficient binding of the small ribosomal subunit, and subsequent scanning for the initiator codon. This Gallus gallus (Chicken) protein is Eukaryotic initiation factor 4A-II (EIF4A2).